A 149-amino-acid polypeptide reads, in one-letter code: Calmodulin (149 aa).

The residue at position 2 (A2) is an N-acetylalanine. EF-hand domains follow at residues 8-43 (DQISEFKEAFSLFDKDGDGCITTKELGTVMRSLGQN), 44-79 (PTEAELQDMINEVDADGNGTIDFPEFLNLMARKMKD), 81-116 (DSEEELKEAFRVFDKDQNGFISAAELRHVMTNLGEK), and 117-149 (LTDEEVDEMIREADVDGDGQINYDEFVKVMMAK). The Ca(2+) site is built by D21, D23, D25, C27, E32, D57, D59, N61, T63, E68, D94, D96, N98, and E105. Residue K116 is modified to N6,N6,N6-trimethyllysine. Ca(2+)-binding residues include D130, D132, D134, Q136, and E141.

Belongs to the calmodulin family.

Calmodulin mediates the control of a large number of enzymes, ion channels and other proteins by Ca(2+). Among the enzymes to be stimulated by the calmodulin-Ca(2+) complex are a number of protein kinases and phosphatases. The sequence is that of Calmodulin (CCM1) from Capsicum annuum (Capsicum pepper).